The primary structure comprises 198 residues: Sulfite reductase, dissimilatory-type subunit alpha (198 aa).

Positions 45, 64, 67, and 70 each coordinate [4Fe-4S] cluster. One can recognise a 4Fe-4S ferredoxin-type domain in the interval 55–83 (GTLSIDNKNCTRCMHCINTMPRALKIGDE).

As to quaternary structure, heterohexamer of two alpha, two beta and two gamma subunits.

Its function is as follows. Part of the complex that catalyzes the reduction of sulfite to sulfide. The alpha and beta subunits may have arisen by gene duplication. They both bind 2 iron-sulfur clusters, but the alpha subunit seems to be catalytically inactive, due to substitutions along the putative substrate access channel, and because it binds sirohydrochlorin (the dematallated form of siroheme) instead of siroheme. This chain is Sulfite reductase, dissimilatory-type subunit alpha (dsrA), found in Megalodesulfovibrio gigas (strain ATCC 19364 / DSM 1382 / NCIMB 9332 / VKM B-1759) (Desulfovibrio gigas).